Reading from the N-terminus, the 910-residue chain is Staphylococcal nuclease domain-containing protein 1 (910 aa).

Position 2 is an N-acetylalanine (Ala-2). TNase-like domains lie at 18–166 (TVQR…MWSE), 193–328 (KPVN…IWRD), and 341–496 (KQFV…LHSK). Thr-103 carries the post-translational modification Phosphothreonine. Lys-193 carries the N6-acetyllysine modification. Thr-240 carries the phosphothreonine modification. 2 short sequence motifs (nuclear localization signal) span residues 321-325 (RRLRI) and 388-392 (KKLRP). Phosphoserine is present on Ser-426. Lys-513 is covalently cross-linked (Glycyl lysine isopeptide (Lys-Gly) (interchain with G-Cter in SUMO2)). Positions 525–660 (GRSEAVVEYV…KQKKEKVWAH (136 aa)) constitute a TNase-like 4 domain. An N6-acetyllysine modification is found at Lys-641. A Phosphoserine modification is found at Ser-645. The Tudor domain occupies 729–787 (APRRGEFCIAKFVDGEWYRARVEKVESPAKVHVFYIDYGNREILPSTRLGTLPPAFSTR). Thr-779 is modified (phosphothreonine). Phosphoserine is present on residues Ser-785 and Ser-909.

As to quaternary structure, forms a ternary complex with STAT6 and POLR2A. Associates with the RNA-induced silencing complex (RISC). Interacts with the RISC components AGO2, FMR1 and TNRC6A. Interacts with GTF2E1 and GTF2E2. Interacts with PIM1. Interacts with STAT5. Interacts with SYT11 (via C2 2 domain); the interaction with SYT11 is direct. In terms of processing, phosphorylated by PIM1 in vitro. In terms of tissue distribution, in lactating cows highly expressed in mammary epithelial cells.

It is found in the cytoplasm. The protein resides in the nucleus. The protein localises to the melanosome. The catalysed reaction is Endonucleolytic cleavage to nucleoside 3'-phosphates and 3'-phosphooligonucleotide end-products.. Its function is as follows. Endonuclease that mediates miRNA decay of both protein-free and AGO2-loaded miRNAs. As part of its function in miRNA decay, regulates mRNAs involved in G1-to-S phase transition. Functions as a bridging factor between STAT6 and the basal transcription factor. Plays a role in PIM1 regulation of MYB activity. Functions as a transcriptional coactivator for STAT5. The chain is Staphylococcal nuclease domain-containing protein 1 (SND1) from Bos taurus (Bovine).